Reading from the N-terminus, the 125-residue chain is Phosphoribosyl-AMP cyclohydrolase (125 aa).

Aspartate 74 provides a ligand contact to Mg(2+). A Zn(2+)-binding site is contributed by cysteine 75. Aspartate 76 and aspartate 78 together coordinate Mg(2+). Residues cysteine 92 and cysteine 99 each contribute to the Zn(2+) site.

It belongs to the PRA-CH family. Homodimer. Mg(2+) serves as cofactor. Zn(2+) is required as a cofactor.

It localises to the cytoplasm. It carries out the reaction 1-(5-phospho-beta-D-ribosyl)-5'-AMP + H2O = 1-(5-phospho-beta-D-ribosyl)-5-[(5-phospho-beta-D-ribosylamino)methylideneamino]imidazole-4-carboxamide. Its pathway is amino-acid biosynthesis; L-histidine biosynthesis; L-histidine from 5-phospho-alpha-D-ribose 1-diphosphate: step 3/9. Functionally, catalyzes the hydrolysis of the adenine ring of phosphoribosyl-AMP. This Trichlorobacter lovleyi (strain ATCC BAA-1151 / DSM 17278 / SZ) (Geobacter lovleyi) protein is Phosphoribosyl-AMP cyclohydrolase.